The following is an 80-amino-acid chain: Exodeoxyribonuclease 7 small subunit (80 aa).

This sequence belongs to the XseB family. In terms of assembly, heterooligomer composed of large and small subunits.

It localises to the cytoplasm. It carries out the reaction Exonucleolytic cleavage in either 5'- to 3'- or 3'- to 5'-direction to yield nucleoside 5'-phosphates.. Bidirectionally degrades single-stranded DNA into large acid-insoluble oligonucleotides, which are then degraded further into small acid-soluble oligonucleotides. The polypeptide is Exodeoxyribonuclease 7 small subunit (Photobacterium profundum (strain SS9)).